A 548-amino-acid chain; its full sequence is MGRSKLASRPAEEDLNPGKSKRKKISLGPENAAASISTGIEAGNERKPGLYCCNYCDKDLSGLVRFKCAVCMDFDLCVECFSVGVELNRHKNSHPYRVMDNLSFSLVTSDWNADEEILLLEAIATYGFGNWKEVADHVGSKTTTECIKHFNSAYMQSPCFPLPDLSHTIGKSKDELLAMSKDSAVKTEIPAFVRLSPKEELPVSAEIKHEASGKVNEIDPPLSALAGVKKKGNVPQAKDIIKLEAAKQQSDRSVGEKKLRLPGEKVPLVTELYGYNLKREEFEIEHDNDAEQLLADMEFKDSDTDAEREQKLQVLRIYSKRLDERKRRKEFVLERNLLYPDQYEMSLSAEERKIYKSCKVFARFQSKEEHKELIKKVIEEHQILRRIEDLQEARTAGCRTTSDANRFIEEKRKKEAEESMLLRLNHGAPGSIAGKTLKSPRGLPRNLHPFGSDSLPKVTPPRIYSGLDTWDVDGLLGADLLSETEKKMCNETRILPVHYLKMLDILTREIKKGQIKKKSDAYSFFKVEPSKVDRVYDMLVHKGIGDST.

Residues 1–30 (MGRSKLASRPAEEDLNPGKSKRKKISLGPE) are disordered. The segment at 48–104 (PGLYCCNYCDKDLSGLVRFKCAVCMDFDLCVECFSVGVELNRHKNSHPYRVMDNLSF) adopts a ZZ-type zinc-finger fold. Positions 53, 56, 68, 71, 77, 80, 90, and 94 each coordinate Zn(2+). Positions 106-158 (LVTSDWNADEEILLLEAIATYGFGNWKEVADHVGSKTTTECIKHFNSAYMQSP) constitute an SANT domain. Lys257 bears the N6-acetyllysine; by GCN5 mark. The stretch at 365-386 (QSKEEHKELIKKVIEEHQILRR) forms a coiled coil. Residues 461–548 (PRIYSGLDTW…LVHKGIGDST (88 aa)) form the SWIRM domain.

In terms of assembly, interacts in vitro with the HAT domain of GCN5 and with the DNA-binding domain of the transcriptional activator DREB1B/CBF1. Acetylated in vitro by GCN5, but acetylation is not essential for biological activity. Expressed in roots and leaves.

It is found in the nucleus. Its function is as follows. Required for the function of some acidic activation domains, which activate transcription from a distant site. The exact mechanism of action is not yet known. ADA2 stimulates the acetyltransferase activity of GCN5 on free histones or nucleosomes, probably by opening up the promoter region. This chain is Transcriptional adapter ADA2a (ADA2A), found in Arabidopsis thaliana (Mouse-ear cress).